Consider the following 438-residue polypeptide: Xylose isomerase (438 aa).

Residues Asp-306 and Asp-308 each coordinate Mg(2+).

This sequence belongs to the xylose isomerase family. As to quaternary structure, homotetramer. The cofactor is Mg(2+).

Its subcellular location is the cytoplasm. It catalyses the reaction alpha-D-xylose = alpha-D-xylulofuranose. This is Xylose isomerase from Caldicellulosiruptor bescii (strain ATCC BAA-1888 / DSM 6725 / KCTC 15123 / Z-1320) (Anaerocellum thermophilum).